The primary structure comprises 1042 residues: Sarcoplasmic/endoplasmic reticulum calcium ATPase 2 (1042 aa).

Residues 1 to 48 (MENAHTKTVEEVLGHFGVNESTGLSLEQVKKLKERWGSNELPAEEGKT) lie on the Cytoplasmic side of the membrane. At Ser38 the chain carries Phosphoserine. A helical transmembrane segment spans residues 49 to 69 (LLELVIEQFEDLLVRILLLAA). Over 70-89 (CISFVLAWFEEGEETITAFV) the chain is Lumenal. Residues 90 to 110 (EPFVILLILVANAIVGVWQER) traverse the membrane as a helical segment. Residues 111–253 (NAENAIEALK…QERTPLQQKL (143 aa)) lie on the Cytoplasmic side of the membrane. The helical transmembrane segment at 254 to 273 (DEFGEQLSKVISLICIAVWI) threads the bilayer. Residues 274–295 (INIGHFNDPVHGGSWIRGAIYY) are Lumenal-facing. 3'-nitrotyrosine is present on residues Tyr294 and Tyr295. The helical transmembrane segment at 296–313 (FKIAVALAVAAIPEGLPA) threads the bilayer. Ca(2+)-binding residues include Val304, Ala305, Ile307, and Glu309. The Cytoplasmic portion of the chain corresponds to 314–756 (VITTCLALGT…EEGRAIYNNM (443 aa)). The 4-aspartylphosphate intermediate role is filled by Asp351. Positions 351 and 353 each coordinate Mg(2+). An ATP-binding site is contributed by Thr353. Thr441 bears the Phosphothreonine mark. ATP contacts are provided by Glu442, Arg489, and Lys514. Ser531 carries the phosphoserine modification. Arg559 is a binding site for ATP. An interaction with HAX1 region spans residues 575–594 (MNLEDSANFIKYETNLTFVG). Phosphoserine is present on Ser580. Residues Thr624, Gly625, and Asp626 each contribute to the ATP site. Ser663 is subject to Phosphoserine. ATP contacts are provided by Arg677 and Lys683. A Mg(2+)-binding site is contributed by Asp702. Residue Asn705 participates in ATP binding. The chain crosses the membrane as a helical span at residues 757–776 (KQFIRYLISSNVGEVVCIFL). Ca(2+) is bound by residues Asn767 and Glu770. Residues 777–786 (TAALGFPEAL) lie on the Lumenal side of the membrane. Residues 787–807 (IPVQLLWVNLVTDGLPATALG) form a helical membrane-spanning segment. An interaction with PLN region spans residues 787-807 (IPVQLLWVNLVTDGLPATALG). An interaction with TMEM64 and PDIA3 region spans residues 788–1042 (PVQLLWVNLV…DTNFSDMFWS (255 aa)). Residues Asn795, Thr798, and Asp799 each contribute to the Ca(2+) site. At 808-827 (FNPPDLDIMNKPPRNPKEPL) the chain is on the cytoplasmic side. Residues 828–850 (ISGWLFFRYLAIGCYVGAATVGA) form a helical membrane-spanning segment. At 851–896 (AAWWFIAADGGPRVTFYQLSHFLQCKEDNPDFEGVDCAVFESPYPM) the chain is on the lumenal side. A disulfide bridge links Cys875 with Cys887. The helical transmembrane segment at 897–916 (TMALSVLVTIEMCNALNSLS) threads the bilayer. Glu907 is a binding site for Ca(2+). The Cytoplasmic segment spans residues 917–929 (ENQSLLRMPPWEN). Residues 930–948 (IWLVGSICLSMSLHFLILY) traverse the membrane as a helical segment. Residues 931 to 942 (WLVGSICLSMSL) are interaction with PLN. Over 949–963 (VEPLPLIFQITPLNL) the chain is Lumenal. Residues 964–984 (TQWLMVLKISLPVILMDETLK) form a helical membrane-spanning segment. At 985 to 1042 (FVARNYLEPGKECVQPATKSCSFSACTDGISWPFVLLIMPLVIWVYSTDTNFSDMFWS) the chain is on the cytoplasmic side.

Belongs to the cation transport ATPase (P-type) (TC 3.A.3) family. Type IIA subfamily. In terms of assembly, interacts with sarcolipin (SLN); the interaction inhibits ATP2A2 Ca(2+) affinity. Interacts with phospholamban (PLN); the interaction inhibits ATP2A2 Ca(2+) affinity. Interacts with myoregulin (MRLN). Interacts with ARLN and ERLN; the interactions inhibit ATP2A2 Ca(2+) affinity. Interacts with STRIT1/DWORF; the interaction results in activation of ATP2A2. Interacts with the monomeric forms of SLN, PLN, ARLN, ERLN and STRI1/DWORF. Interacts with HAX1. Interacts with S100A8 and S100A9. Interacts with SLC35G1 and STIM1. Interacts with TMEM203. Interacts with TMEM64 and PDIA3. Interacts with TMX1. Interacts with TMX2. Interacts with VMP1; VMP1 competes with PLN and SLN to prevent them from forming an inhibitory complex with ATP2A2. Interacts with ULK1. Interacts with S100A1 in a Ca(2+)-dependent manner. Interacts with TUNAR. Interacts with FLVCR2; this interaction occurs in the absence of heme and promotes ATP2A2 proteasomal degradation; this complex is dissociated upon heme binding. Interacts with FNIP1. Interacts with TRAM2 (via C-terminus). The cofactor is Mg(2+). Nitrated under oxidative stress. Nitration on the two tyrosine residues inhibits catalytic activity. Post-translationally, serotonylated on Gln residues by TGM2 in response to hypoxia, leading to its inactivation. Detected in heart left ventricle (at protein level). Isoform 2 is highly expressed in heart and slow twitch skeletal muscle. Isoform 1 is widely expressed.

The protein localises to the endoplasmic reticulum membrane. The protein resides in the sarcoplasmic reticulum membrane. The enzyme catalyses Ca(2+)(in) + ATP + H2O = Ca(2+)(out) + ADP + phosphate + H(+). With respect to regulation, has different conformational states with differential Ca2+ affinity. The E1 conformational state (active form) shows high Ca(2+) affinity, while the E2 state exhibits low Ca(2+) affinity. Binding of ATP allosterically increases its affinity for subsequent binding of Ca2+. Reversibly inhibited by phospholamban (PLN) at low calcium concentrations. PLN inhibits ATP2A2 Ca(2+) affinity by disrupting its allosteric activation by ATP. Inhibited by sarcolipin (SLN) and myoregulin (MRLN). The inhibition is blocked by VMP1. Enhanced by STRIT1/DWORF; STRIT1 increases activity by displacing sarcolipin (SLN), phospholamban (PLN) and myoregulin (MRLN). Stabilizes SERCA2 in its E2 state. This magnesium-dependent enzyme catalyzes the hydrolysis of ATP coupled with the translocation of calcium from the cytosol to the sarcoplasmic reticulum lumen. Involved in autophagy in response to starvation. Upon interaction with VMP1 and activation, controls ER-isolation membrane contacts for autophagosome formation. Also modulates ER contacts with lipid droplets, mitochondria and endosomes. In coordination with FLVCR2 mediates heme-stimulated switching from mitochondrial ATP synthesis to thermogenesis. Its function is as follows. Involved in the regulation of the contraction/relaxation cycle. Acts as a regulator of TNFSF11-mediated Ca(2+) signaling pathways via its interaction with TMEM64 which is critical for the TNFSF11-induced CREB1 activation and mitochondrial ROS generation necessary for proper osteoclast generation. Association between TMEM64 and SERCA2 in the ER leads to cytosolic Ca(2+) spiking for activation of NFATC1 and production of mitochondrial ROS, thereby triggering Ca(2+) signaling cascades that promote osteoclast differentiation and activation. This chain is Sarcoplasmic/endoplasmic reticulum calcium ATPase 2 (ATP2A2), found in Sus scrofa (Pig).